Reading from the N-terminus, the 560-residue chain is (E)-beta-farnesene synthase (560 aa).

Mg(2+)-binding residues include D312, D316, D457, and E465. Residues 312-316 (DDTFD) carry the DDXXD motif motif.

The protein belongs to the terpene synthase family. It depends on Mg(2+) as a cofactor. Co(2+) is required as a cofactor. Requires Mn(2+) as cofactor.

It is found in the cytoplasm. The enzyme catalyses (2E,6E)-farnesyl diphosphate = (E)-beta-farnesene + diphosphate. Its pathway is secondary metabolite biosynthesis; terpenoid biosynthesis. In terms of biological role, sesquiterpene cyclase catalyzing the production of beta-farnesene from farnesyl diphosphate. In Citrus junos (Yuzu), this protein is (E)-beta-farnesene synthase.